The sequence spans 1155 residues: Pesticidal crystal protein Cry1Ab (1155 aa).

The protein belongs to the delta endotoxin family.

Functionally, promotes colloidosmotic lysis by binding to the midgut epithelial cells of many lepidopteran larvae. The polypeptide is Pesticidal crystal protein Cry1Ab (cry1Ab) (Bacillus thuringiensis subsp. aizawai).